A 302-amino-acid polypeptide reads, in one-letter code: UDP-3-O-acyl-N-acetylglucosamine deacetylase (302 aa).

Residues His-78, His-237, and Asp-241 each coordinate Zn(2+). His-264 serves as the catalytic Proton donor.

Belongs to the LpxC family. The cofactor is Zn(2+).

It catalyses the reaction a UDP-3-O-[(3R)-3-hydroxyacyl]-N-acetyl-alpha-D-glucosamine + H2O = a UDP-3-O-[(3R)-3-hydroxyacyl]-alpha-D-glucosamine + acetate. The protein operates within glycolipid biosynthesis; lipid IV(A) biosynthesis; lipid IV(A) from (3R)-3-hydroxytetradecanoyl-[acyl-carrier-protein] and UDP-N-acetyl-alpha-D-glucosamine: step 2/6. In terms of biological role, catalyzes the hydrolysis of UDP-3-O-myristoyl-N-acetylglucosamine to form UDP-3-O-myristoylglucosamine and acetate, the committed step in lipid A biosynthesis. In Hahella chejuensis (strain KCTC 2396), this protein is UDP-3-O-acyl-N-acetylglucosamine deacetylase.